Reading from the N-terminus, the 224-residue chain is Proline/serine-rich protein C17A5.10 (224 aa).

Positions 1–10 (MTDDSVPPPS) are enriched in pro residues. A disordered region spans residues 1–110 (MTDDSVPPPS…SNYNTAKPPY (110 aa)). Positions 31–52 (TSTSAGHPSSSSSTLPNYAASS) are enriched in low complexity. 3 stretches are compositionally biased toward polar residues: residues 53–68 (LNSR…NAYS), 77–94 (PTSQ…STMY), and 101–110 (SNYNTAKPPY).

Belongs to the HUA1 family.

The protein resides in the cytoplasm. Functionally, may be involved in assembly and disassembly of the actin cytoskeleton. The chain is Proline/serine-rich protein C17A5.10 from Schizosaccharomyces pombe (strain 972 / ATCC 24843) (Fission yeast).